Here is a 679-residue protein sequence, read N- to C-terminus: MANSQRKILVTSALPYANGPIHLGHMLEYIQTDIWSRFQKLRGHECHYICADDAHGTPIMLKAQQLGMTPEDMIAQVQKEHEKDFADFNIQFDNFHSTHSDENRELASEIYIKLRDAGYIKTKTISQLFDPEKSMFLPDRFVKGTCPRCKSEDQYGDNCDNCGATYSTTDLIDPKSAVSGATPVMKDTEHFFFDLPSFEGMLKEWINSGSLQQEMANKLGEWFEQGLQQWDISRDAPYFGFEIPDAPGKFFYVWLDAPIGYMGSFKNLCNKRDDLNFDDFWSKDSTAEVYHFIGKDIVYFHSLFWPAMLEGAGLRKPTSVYAHGYVTVNGAKMSKSKGTFIKARTYLDNLDPEYLRYYYAAKLSSRIDDLDLNLEDFAQRVNSDLVGKLVNLASRTAGFISKRFDGKLAKIADTSLTESFLAKQETIANFYETREFGKAMREVMTLADIANAYVADSAPWQLIKDDAKQEEAHQVCTNALNLFRILVTYLKPVLPKLAQDVEAFLQMELTWDNLDVDLAGHEIAKFKALMQRVEMKSIEAIIEASKENLQVTAEPEVKKQDKTPLEQDPISEEISFEDFAKIDLRIARIAKAEHVKEANKLLRLELDLGGETKQVFAGIKSAYAPEDLEGKLTVMVANLAPRQMRFGVSEGMVLAAGPGGKDLWIMEPHEGAQPGMKVK.

Residues 15-25 carry the 'HIGH' region motif; sequence PYANGPIHLGH. Zn(2+) contacts are provided by C146, C149, C159, and C162. A 'KMSKS' region motif is present at residues 332 to 336; that stretch reads KMSKS. K335 provides a ligand contact to ATP. In terms of domain architecture, tRNA-binding spans 578-679; that stretch reads DFAKIDLRIA…EGAQPGMKVK (102 aa).

It belongs to the class-I aminoacyl-tRNA synthetase family. MetG type 1 subfamily. As to quaternary structure, homodimer. Zn(2+) is required as a cofactor.

It is found in the cytoplasm. It carries out the reaction tRNA(Met) + L-methionine + ATP = L-methionyl-tRNA(Met) + AMP + diphosphate. Its function is as follows. Is required not only for elongation of protein synthesis but also for the initiation of all mRNA translation through initiator tRNA(fMet) aminoacylation. This Shewanella pealeana (strain ATCC 700345 / ANG-SQ1) protein is Methionine--tRNA ligase.